A 776-amino-acid polypeptide reads, in one-letter code: MTISPPERGEKAKPIYDQPVDRDHVPADFEKFEQPGFFSKSLAKGPNSTTWIWNLHADAHDFDTHIGDLEETSRKIFSAHFGHLAIVFIWLSGAFFHGARFSNYSGWLADPTHVKASAQVVWPIVGQEIMNADVGAGFNGIQITSGIFQMWRAWGITSETELMALATGALIMAGLVLHGGIFHYHKAAPKLEWFKKIESMLQHHQIGLFGLGSLGWTGHLIHVANPTNALLDAIDAGTPMVLDGKTIATAADIPLPHELYNADLVGQIYPGLASGIGNFFSANWWAFSDFLTNNGGVNPVTGALWSTDVAHHHLAWAVFLMFGGHVYRSRFGIGHSMKEIMGNVKGDPLLFPAPNGHKGLFEFLSNSWHAQLAVNLACIGSGSIVVAHHMYSLPPYPYLATDYPTVLGLFTHHMWIGGLMICGAAAHAGIAVIRDYDVSVHVDNVLDRMFKARDAIISHLNWVCMFLGFHSFGLYIHNDSMRALGRSQDMFSDSAIQLQPVLAQWIQSLWASSIGTSSVVGTTTGLPGAVSDVFNGGVVAVGGKVALMAIPLGTADLMIHHIHAFTIHVTCLILLKGVLFARSSRLVPDKANLGFRFSCDGPGRGGTCQVSSWDHVFLGLFWMYNSLSMVIFYFSWKMQSDVWGTVNSDGSVTHLVSGNFAQSAITVNGWFRDFLWAQSSQVLTSYGTGLSGYGLLFLGGHFVWAFSLMFLFSGRGYWQELFESIIWAHNKLKLAPTIQPRALSITQGRAVGVTHFLFGGIVTTWAFFHARLLGLG.

8 helical membrane passes run 76 to 99, 162 to 185, 201 to 225, 309 to 327, 368 to 391, 407 to 433, 455 to 477, and 557 to 575; these read IFSA…FHGA, LMAL…FHYH, LQHH…HVAN, VAHH…GHVY, WHAQ…HHMY, LGLF…IAVI, AIIS…LYIH, and LMIH…LILL. [4Fe-4S] cluster contacts are provided by Cys-599 and Cys-608. Helical transmembrane passes span 615–636 and 690–712; these read HVFL…YFSW and LSGY…MFLF. Residue His-701 participates in divinylchlorophyll a' binding. Divinyl chlorophyll a is bound by residues Met-709 and Tyr-717. Residue Trp-718 participates in phylloquinone binding. The chain crosses the membrane as a helical span at residues 750–770; sequence AVGVTHFLFGGIVTTWAFFHA.

Belongs to the PsaA/PsaB family. In terms of assembly, the PsaA/B heterodimer binds the P700 divinyl chlorophyll special pair and subsequent electron acceptors. PSI consists of a core antenna complex that captures photons, and an electron transfer chain that converts photonic excitation into a charge separation. The cyanobacterial PSI reaction center is composed of one copy each of PsaA,B,C,D,E,F,I,J,K,L,M and X, and forms trimeric complexes. PSI electron transfer chain: 5 divinyl chlorophyll a, 1 divinyl chlorophyll a', 2 phylloquinones and 3 4Fe-4S clusters. PSI core antenna: 90 divinyl chlorophyll a, 22 carotenoids, 3 phospholipids and 1 galactolipid. P700 is a divinyl chlorophyll a/divinyl chlorophyll a' dimer, A0 is one or more divinyl chlorophyll a, A1 is one or both phylloquinones and FX is a shared 4Fe-4S iron-sulfur center. is required as a cofactor.

The protein resides in the cellular thylakoid membrane. The catalysed reaction is reduced [plastocyanin] + hnu + oxidized [2Fe-2S]-[ferredoxin] = oxidized [plastocyanin] + reduced [2Fe-2S]-[ferredoxin]. In terms of biological role, psaA and PsaB bind P700, the primary electron donor of photosystem I (PSI), as well as the electron acceptors A0, A1 and FX. PSI is a plastocyanin/cytochrome c6-ferredoxin oxidoreductase, converting photonic excitation into a charge separation, which transfers an electron from the donor P700 chlorophyll pair to the spectroscopically characterized acceptors A0, A1, FX, FA and FB in turn. Oxidized P700 is reduced on the lumenal side of the thylakoid membrane by plastocyanin or cytochrome c6. The protein is Photosystem I P700 chlorophyll a apoprotein A1 of Prochlorococcus marinus (strain MIT 9303).